The primary structure comprises 306 residues: 2-phosphoglycerate kinase (306 aa).

The region spanning methionine 1–glutamate 90 is the ATP-cone domain.

It belongs to the 2-phosphoglycerate kinase family. A divalent metal cation is required as a cofactor.

The enzyme catalyses (2R)-2-phosphoglycerate + ATP = (2R)-2,3-bisphosphoglycerate + ADP + H(+). It functions in the pathway thermoadapter biosynthesis; cyclic 2,3-diphosphoglycerate biosynthesis; cyclic 2,3-diphosphoglycerate from 2-phospho-D-glycerate: step 1/2. Functionally, catalyzes the phosphorylation of 2-phosphoglycerate to 2,3-diphosphoglycerate. Involved in the biosynthesis of cyclic 2,3-bisphosphoglycerate, a thermoprotectant. This is 2-phosphoglycerate kinase from Methanothermobacter thermautotrophicus (strain ATCC 29096 / DSM 1053 / JCM 10044 / NBRC 100330 / Delta H) (Methanobacterium thermoautotrophicum).